Consider the following 159-residue polypeptide: Small ribosomal subunit protein uS9 (159 aa).

It belongs to the universal ribosomal protein uS9 family.

The sequence is that of Small ribosomal subunit protein uS9 from Bradyrhizobium diazoefficiens (strain JCM 10833 / BCRC 13528 / IAM 13628 / NBRC 14792 / USDA 110).